We begin with the raw amino-acid sequence, 255 residues long: MAVISMKQLLEAGVHFGHQTRRWNPKMAKYIFTERNGIHVIDLQQTVKLADQAYEFVRDAAANDAVILFVGTKKQAAEAVADEATRAGQYFINHRWLGGTLTNWGTIQKRIARLKEIKRMEEEGTFDVLPKKEVALLNKQRARLEKFLGGIEDMPRIPDVMYVVDPHKEQIAVKEAKKLGIPVVAMVDTNADPDDIDIIIPANDDAIRAVKLITAKLADAIIEGRQGEDADVAFEADTQADSIEDIVEVVEGDNA.

It belongs to the universal ribosomal protein uS2 family.

This chain is Small ribosomal subunit protein uS2, found in Streptococcus pyogenes serotype M3 (strain ATCC BAA-595 / MGAS315).